The chain runs to 652 residues: Acetyl-coenzyme A synthetase (652 aa).

CoA contacts are provided by residues 191 to 194 (RAGR), Thr311, and Asn335. Residues 387–389 (GEP), 411–416 (DTWWQT), Asp500, and Arg515 each bind ATP. Ser523 lines the CoA pocket. Arg526 contributes to the ATP binding site. Val537, His539, and Ile542 together coordinate Mg(2+). Arg584 is a binding site for CoA. Residue Lys609 is modified to N6-acetyllysine; by Pat.

Belongs to the ATP-dependent AMP-binding enzyme family. As to quaternary structure, monomer. Requires Mg(2+) as cofactor. Post-translationally, acetylated. Deacetylation by the SIR2-homolog deacetylase activates the enzyme.

The enzyme catalyses acetate + ATP + CoA = acetyl-CoA + AMP + diphosphate. Its function is as follows. Catalyzes the conversion of acetate into acetyl-CoA (AcCoA), an essential intermediate at the junction of anabolic and catabolic pathways. Acs undergoes a two-step reaction. In the first half reaction, Acs combines acetate with ATP to form acetyl-adenylate (AcAMP) intermediate. In the second half reaction, it can then transfer the acetyl group from AcAMP to the sulfhydryl group of CoA, forming the product AcCoA. Required for acetate recapture but not for acetate excretion when this organism is grown on ethanolamine. Functionally, enables the cell to use acetate during aerobic growth to generate energy via the TCA cycle, and biosynthetic compounds via the glyoxylate shunt. Acetylates CheY, the response regulator involved in flagellar movement and chemotaxis. The sequence is that of Acetyl-coenzyme A synthetase from Salmonella typhimurium (strain LT2 / SGSC1412 / ATCC 700720).